Reading from the N-terminus, the 549-residue chain is DNA ligase 1 (549 aa).

Glu-212 contacts ATP. Lys-214 acts as the N6-AMP-lysine intermediate in catalysis. 6 residues coordinate ATP: Arg-219, Arg-234, Glu-264, Phe-310, Arg-387, and Lys-393.

Belongs to the ATP-dependent DNA ligase family. It depends on Mg(2+) as a cofactor.

The catalysed reaction is ATP + (deoxyribonucleotide)n-3'-hydroxyl + 5'-phospho-(deoxyribonucleotide)m = (deoxyribonucleotide)n+m + AMP + diphosphate.. Functionally, DNA ligase that seals nicks in double-stranded DNA during DNA replication, DNA recombination and DNA repair. The protein is DNA ligase 1 of Methanosarcina barkeri (strain Fusaro / DSM 804).